The primary structure comprises 395 residues: Argininosuccinate synthase (395 aa).

ATP-binding positions include 9-17 (AYSGGLDTS) and Ala37. L-citrulline contacts are provided by Tyr87 and Ser92. Gly117 is a binding site for ATP. Residues Thr119, Asn123, and Asp124 each contribute to the L-aspartate site. L-citrulline is bound at residue Asn123. L-citrulline-binding residues include Arg127, Ser173, Ser182, Glu258, and Tyr270.

This sequence belongs to the argininosuccinate synthase family. Type 1 subfamily. As to quaternary structure, homotetramer.

The protein resides in the cytoplasm. The enzyme catalyses L-citrulline + L-aspartate + ATP = 2-(N(omega)-L-arginino)succinate + AMP + diphosphate + H(+). The protein operates within amino-acid biosynthesis; L-arginine biosynthesis; L-arginine from L-ornithine and carbamoyl phosphate: step 2/3. In Methanospirillum hungatei JF-1 (strain ATCC 27890 / DSM 864 / NBRC 100397 / JF-1), this protein is Argininosuccinate synthase.